The primary structure comprises 341 residues: Methionine import ATP-binding protein MetN (341 aa).

An ABC transporter domain is found at Ile2–Val241. ATP is bound at residue Gly38–Ser45.

The protein belongs to the ABC transporter superfamily. Methionine importer (TC 3.A.1.24) family. The complex is composed of two ATP-binding proteins (MetN), two transmembrane proteins (MetI) and a solute-binding protein (MetQ).

It is found in the cell membrane. The catalysed reaction is L-methionine(out) + ATP + H2O = L-methionine(in) + ADP + phosphate + H(+). It carries out the reaction D-methionine(out) + ATP + H2O = D-methionine(in) + ADP + phosphate + H(+). Part of the ABC transporter complex MetNIQ involved in methionine import. Responsible for energy coupling to the transport system. The sequence is that of Methionine import ATP-binding protein MetN from Staphylococcus saprophyticus subsp. saprophyticus (strain ATCC 15305 / DSM 20229 / NCIMB 8711 / NCTC 7292 / S-41).